A 250-amino-acid polypeptide reads, in one-letter code: Putative B3 domain-containing protein At4g03170 (250 aa).

Over residues Met1 to Thr12 the composition is skewed to polar residues. The interval Met1–Lys90 is disordered. The segment covering Asp34–Glu56 has biased composition (acidic residues). The segment covering Gln72–Gln84 has biased composition (basic and acidic residues). Residues Lys137–Lys245 constitute a DNA-binding region (TF-B3).

It localises to the nucleus. This chain is Putative B3 domain-containing protein At4g03170, found in Arabidopsis thaliana (Mouse-ear cress).